A 465-amino-acid chain; its full sequence is Na(+)-translocating NADH-quinone reductase subunit A (465 aa).

This sequence belongs to the NqrA family. In terms of assembly, composed of six subunits; NqrA, NqrB, NqrC, NqrD, NqrE and NqrF.

It carries out the reaction a ubiquinone + n Na(+)(in) + NADH + H(+) = a ubiquinol + n Na(+)(out) + NAD(+). In terms of biological role, NQR complex catalyzes the reduction of ubiquinone-1 to ubiquinol by two successive reactions, coupled with the transport of Na(+) ions from the cytoplasm to the periplasm. NqrA to NqrE are probably involved in the second step, the conversion of ubisemiquinone to ubiquinol. The sequence is that of Na(+)-translocating NADH-quinone reductase subunit A from Chlamydia trachomatis serovar L2b (strain UCH-1/proctitis).